The following is a 496-amino-acid chain: Probable uroporphyrinogen-III C-methyltransferase (496 aa).

Belongs to the precorrin methyltransferase family.

It catalyses the reaction uroporphyrinogen III + 2 S-adenosyl-L-methionine = precorrin-2 + 2 S-adenosyl-L-homocysteine + H(+). Functionally, siroheme synthase involved in methionine biosynthesis. The polypeptide is Probable uroporphyrinogen-III C-methyltransferase (Schizosaccharomyces pombe (strain 972 / ATCC 24843) (Fission yeast)).